We begin with the raw amino-acid sequence, 339 residues long: TATA-box-binding protein (339 aa).

3 disordered regions span residues 1-21, 36-71, and 127-159; these read MDQN…QGAM, TGLT…QQQQ, and LTTA…SESS. The segment covering 38-50 has biased composition (polar residues); that stretch reads LTPQPIQNTNSLS. 3 stretches are compositionally biased toward low complexity: residues 57 to 71, 127 to 138, and 146 to 156; these read RQQQ…QQQQ, LTTAPLPGTTPL, and MTPITPATPAS. Tandem repeats lie at residues 165-241 and 255-332. 5 residues coordinate DNA: Asn167, Arg203, Lys218, Asn257, and Arg294.

This sequence belongs to the TBP family. Binds DNA as monomer. Component of the TFIID basal transcription factor complex, composed of TATA-box-binding protein TBP, and a number of TBP-associated factors (TAFs), including TAF1, TAF2, TAF3, TAF4, TAF5, TAF6, TAF7, TAF8, TAF9, TAF10, TAF11, TAF12 and TAF13. Part of a TFIID-containing RNA polymerase II pre-initiation complex that is composed of TBP and at least GTF2A1, GTF2A2, GTF2E1, GTF2E2, GTF2F1, GTF2H2, GTF2H3, GTF2H4, GTF2H5, GTF2B, TCEA1, ERCC2, ERCC3, TAF1, TAF2, TAF3, TAF4, TAF5, TAF6, TAF7, TAF8, TAF9, TAF10, TAF11, TAF12 and TAF13. Component of the transcription factor SL1/TIF-IB complex, composed of TBP and at least TAF1A, TAF1B, TAF1C and TAF1D. Association of TBP to form either TFIID or SL1/TIF-IB appears to be mutually exclusive. Interacts with TAF1A, TAF1B and TAF1C. Interacts with TFIIB, NCOA6, DRAP1, DR1 and ELF3. Interacts with SPIB, SNAPC1, SNAPC2 and SNAPC4. Interacts with UTF1. Interacts with BRF2; this interaction promotes recruitment of BRF2 to TATA box-containing promoters. Interacts with UBTFD. Interacts with GPBP1D. Interacts with CITED2. Interacts with ATF7IP. Interacts with LLPH. Interacts with HSF1 (via transactivation domain). Interacts with GTF2B (via C-terminus); this interaction with promoter-bound TBP guides RNA polymerase II into the pre-initiation complex (PIC). Interacts with PAX5. Interacts with MSX1; the interaction may inhibit MSX1 autoinactivation. In terms of assembly, (Microbial infection) Interacts with HIV-1 Tat. As to quaternary structure, (Microbial infection) Interacts with herpes simplex virus 1 ICP4. (Microbial infection) Interacts with herpes simplex virus 2 ICP4. In terms of assembly, (Microbial infection) Interacts with human adenovirus E1A protein; this interaction probably disrupts the TBP-TATA complex. As to expression, widely expressed, with levels highest in the testis and ovary.

The protein localises to the nucleus. The TFIID basal transcription factor complex plays a major role in the initiation of RNA polymerase II (Pol II)-dependent transcription. TFIID recognizes and binds promoters with or without a TATA box via its subunit TBP, a TATA-box-binding protein, and promotes assembly of the pre-initiation complex (PIC). The TFIID complex consists of TBP and TBP-associated factors (TAFs), including TAF1, TAF2, TAF3, TAF4, TAF5, TAF6, TAF7, TAF8, TAF9, TAF10, TAF11, TAF12 and TAF13. The TFIID complex structure can be divided into 3 modules TFIID-A, TFIID-B, and TFIID-C. TBP forms the TFIID-A module together with TAF3 and TAF5. TBP is a general transcription factor that functions at the core of the TFIID complex. During assembly of the core PIC on the promoter, as part of TFIID, TBP binds to and also bends promoter DNA, irrespective of whether the promoter contains a TATA box. Component of a BRF2-containing transcription factor complex that regulates transcription mediated by RNA polymerase III. Component of the transcription factor SL1/TIF-IB complex, which is involved in the assembly of the PIC during RNA polymerase I-dependent transcription. The rate of PIC formation probably is primarily dependent on the rate of association of SL1 with the rDNA promoter. SL1 is involved in stabilization of nucleolar transcription factor 1/UBTF on rDNA. This Homo sapiens (Human) protein is TATA-box-binding protein (TBP).